We begin with the raw amino-acid sequence, 354 residues long: ATP-dependent (S)-NAD(P)H-hydrate dehydratase (354 aa).

Residues 42–350 (AENILRAITP…ECLGRSLEDI (309 aa)) enclose the YjeF C-terminal domain. (6S)-NADPHX contacts are provided by residues Gly155 and 208–214 (NVNEYKR). Residues 248-252 (KGKSD) and 267-276 (GSPRRCGGQG) contribute to the ATP site. Asp277 contributes to the (6S)-NADPHX binding site.

It belongs to the NnrD/CARKD family. The cofactor is Mg(2+).

It catalyses the reaction (6S)-NADHX + ATP = ADP + phosphate + NADH + H(+). The catalysed reaction is (6S)-NADPHX + ATP = ADP + phosphate + NADPH + H(+). Its function is as follows. Catalyzes the dehydration of the S-form of NAD(P)HX at the expense of ATP, which is converted to ADP. Together with NAD(P)HX epimerase, which catalyzes the epimerization of the S- and R-forms, the enzyme allows the repair of both epimers of NAD(P)HX, a damaged form of NAD(P)H that is a result of enzymatic or heat-dependent hydration. The sequence is that of ATP-dependent (S)-NAD(P)H-hydrate dehydratase from Vitis vinifera (Grape).